Here is a 166-residue protein sequence, read N- to C-terminus: MSHKVSKKLDEEQINELREIFRSFDRNKDGSLTQLELGSLLRALGVKPSPDQFETLIDKADTKSNGLVEFPEFVALVSPELLSPAKRTTPYTEEQLLRLFRIFDTDGNGFITAAELAHSMAKLGHALTVAELTGMIKEADSDGDGRINFQEFAKAINSAAFDDIWG.

EF-hand domains follow at residues 12 to 47 (EQIN…LGVK), 48 to 83 (PSPD…ELLS), 91 to 126 (YTEE…LGHA), and 127 to 162 (LTVA…AAFD). Residues aspartate 25, asparagine 27, aspartate 29, serine 31, and glutamate 36 each contribute to the Ca(2+) site. Residues aspartate 104, aspartate 106, asparagine 108, glutamate 115, aspartate 140, aspartate 142, aspartate 144, arginine 146, and glutamate 151 each coordinate Ca(2+).

Functionally, potential calcium sensor. The chain is Probable calcium-binding protein CML17 (CML17) from Arabidopsis thaliana (Mouse-ear cress).